A 292-amino-acid polypeptide reads, in one-letter code: High-affinity heme uptake system protein IsdE (292 aa).

An N-terminal signal peptide occupies residues 1 to 19 (MRIIKYLTILVISVVILTS). C20 carries N-palmitoyl cysteine lipidation. The S-diacylglycerol cysteine moiety is linked to residue C20. The Fe/B12 periplasmic-binding domain occupies 35–291 (RIVPTTVALT…QLYDLFYKDK (257 aa)). Residues V41, A42, S60, Y61, M78, and H229 each contribute to the heme site.

The protein belongs to the bacterial solute-binding protein 8 family. Requires heme b as cofactor.

It localises to the cell membrane. Functionally, involved in heme (porphyrin) scavenging. Binds Fe(2+) and Fe(3+) heme but the largest fraction is Fe(2+) heme. Functions as a high-affinity heme binding protein and probably has a role in relaying heme-iron from cell wall-anchored isd proteins receptors to the probable permease IsdF. In Staphylococcus aureus (strain MRSA252), this protein is High-affinity heme uptake system protein IsdE (isdE).